The chain runs to 250 residues: 4-hydroxy-tetrahydrodipicolinate reductase (250 aa).

NAD(+) contacts are provided by residues 10–15, 78–80, and 105–108; these read GAKGRI, GTT, and APNF. Catalysis depends on His-135, which acts as the Proton donor/acceptor. His-136 lines the (S)-2,3,4,5-tetrahydrodipicolinate pocket. Lys-139 serves as the catalytic Proton donor. Residue 145–146 participates in (S)-2,3,4,5-tetrahydrodipicolinate binding; the sequence is GT.

The protein belongs to the DapB family.

It localises to the cytoplasm. It catalyses the reaction (S)-2,3,4,5-tetrahydrodipicolinate + NAD(+) + H2O = (2S,4S)-4-hydroxy-2,3,4,5-tetrahydrodipicolinate + NADH + H(+). It carries out the reaction (S)-2,3,4,5-tetrahydrodipicolinate + NADP(+) + H2O = (2S,4S)-4-hydroxy-2,3,4,5-tetrahydrodipicolinate + NADPH + H(+). Its pathway is amino-acid biosynthesis; L-lysine biosynthesis via DAP pathway; (S)-tetrahydrodipicolinate from L-aspartate: step 4/4. Functionally, catalyzes the conversion of 4-hydroxy-tetrahydrodipicolinate (HTPA) to tetrahydrodipicolinate. The chain is 4-hydroxy-tetrahydrodipicolinate reductase from Streptomyces coelicolor (strain ATCC BAA-471 / A3(2) / M145).